The chain runs to 1099 residues: Carbamoyl phosphate synthase large chain (1099 aa).

The carboxyphosphate synthetic domain stretch occupies residues 1 to 402 (MPKREDIKRI…ALGKALRSLE (402 aa)). 12 residues coordinate ATP: Arg129, Arg169, Gly175, Gly176, Glu208, Val210, Glu215, Gly241, Ile242, His243, Gln285, and Glu299. Positions 133 to 328 (KETMEKAGLE…IAKVAALLAV (196 aa)) constitute an ATP-grasp 1 domain. Mg(2+) contacts are provided by Gln285, Glu299, and Asn301. Residues Gln285, Glu299, and Asn301 each coordinate Mn(2+). Positions 403-541 (LDAAPKLDLE…STYNGVENEA (139 aa)) are oligomerization domain. The interval 542–944 (VPSDREKIMI…AFAKAQIAAG (403 aa)) is carbamoyl phosphate synthetic domain. Residues 666–857 (AKLLKQIGLK…VARIAAKIMV (192 aa)) enclose the ATP-grasp 2 domain. 10 residues coordinate ATP: Arg702, Lys741, Leu743, Glu748, Gly773, Val774, His775, Ser776, Gln816, and Glu828. Residues Gln816, Glu828, and Asn830 each coordinate Mg(2+). Mn(2+) is bound by residues Gln816, Glu828, and Asn830. Residues 945 to 1099 (NPLPTTGAIL…VRRLTDTWKM (155 aa)) form the MGS-like domain. Residues 945-1099 (NPLPTTGAIL…VRRLTDTWKM (155 aa)) form an allosteric domain region.

It belongs to the CarB family. Composed of two chains; the small (or glutamine) chain promotes the hydrolysis of glutamine to ammonia, which is used by the large (or ammonia) chain to synthesize carbamoyl phosphate. Tetramer of heterodimers (alpha,beta)4. It depends on Mg(2+) as a cofactor. Mn(2+) serves as cofactor.

The catalysed reaction is hydrogencarbonate + L-glutamine + 2 ATP + H2O = carbamoyl phosphate + L-glutamate + 2 ADP + phosphate + 2 H(+). It catalyses the reaction hydrogencarbonate + NH4(+) + 2 ATP = carbamoyl phosphate + 2 ADP + phosphate + 2 H(+). It functions in the pathway amino-acid biosynthesis; L-arginine biosynthesis; carbamoyl phosphate from bicarbonate: step 1/1. The protein operates within pyrimidine metabolism; UMP biosynthesis via de novo pathway; (S)-dihydroorotate from bicarbonate: step 1/3. Functionally, large subunit of the glutamine-dependent carbamoyl phosphate synthetase (CPSase). CPSase catalyzes the formation of carbamoyl phosphate from the ammonia moiety of glutamine, carbonate, and phosphate donated by ATP, constituting the first step of 2 biosynthetic pathways, one leading to arginine and/or urea and the other to pyrimidine nucleotides. The large subunit (synthetase) binds the substrates ammonia (free or transferred from glutamine from the small subunit), hydrogencarbonate and ATP and carries out an ATP-coupled ligase reaction, activating hydrogencarbonate by forming carboxy phosphate which reacts with ammonia to form carbamoyl phosphate. The chain is Carbamoyl phosphate synthase large chain from Thermotoga petrophila (strain ATCC BAA-488 / DSM 13995 / JCM 10881 / RKU-1).